We begin with the raw amino-acid sequence, 227 residues long: Deoxyribose-phosphate aldolase (227 aa).

The active-site Proton donor/acceptor is aspartate 84. Lysine 146 serves as the catalytic Schiff-base intermediate with acetaldehyde. The active-site Proton donor/acceptor is the lysine 188.

Belongs to the DeoC/FbaB aldolase family. DeoC type 1 subfamily.

The protein resides in the cytoplasm. It catalyses the reaction 2-deoxy-D-ribose 5-phosphate = D-glyceraldehyde 3-phosphate + acetaldehyde. Its pathway is carbohydrate degradation; 2-deoxy-D-ribose 1-phosphate degradation; D-glyceraldehyde 3-phosphate and acetaldehyde from 2-deoxy-alpha-D-ribose 1-phosphate: step 2/2. Functionally, catalyzes a reversible aldol reaction between acetaldehyde and D-glyceraldehyde 3-phosphate to generate 2-deoxy-D-ribose 5-phosphate. This is Deoxyribose-phosphate aldolase from Pyrobaculum islandicum (strain DSM 4184 / JCM 9189 / GEO3).